A 478-amino-acid polypeptide reads, in one-letter code: Adenosylhomocysteinase (478 aa).

Positions 56, 139, and 201 each coordinate substrate. 202–204 (TTT) contributes to the NAD(+) binding site. Substrate is bound by residues Lys-231 and Asp-235. NAD(+) is bound by residues Asn-236, 265–270 (GYGDVG), Glu-288, Asn-323, 344–346 (IGH), and Asn-392.

The protein belongs to the adenosylhomocysteinase family. NAD(+) is required as a cofactor.

The protein localises to the cytoplasm. The enzyme catalyses S-adenosyl-L-homocysteine + H2O = L-homocysteine + adenosine. It participates in amino-acid biosynthesis; L-homocysteine biosynthesis; L-homocysteine from S-adenosyl-L-homocysteine: step 1/1. Functionally, may play a key role in the regulation of the intracellular concentration of adenosylhomocysteine. In Corynebacterium diphtheriae (strain ATCC 700971 / NCTC 13129 / Biotype gravis), this protein is Adenosylhomocysteinase.